The primary structure comprises 1238 residues: Erythroid differentiation-related factor 1 (1238 aa).

4 disordered regions span residues 1–38 (MGDA…AQGS), 220–268 (QPVS…GSEP), 517–561 (PKKE…SDDS), and 620–647 (KKES…RGGP). 3 stretches are compositionally biased toward low complexity: residues 9 to 38 (AEGP…AQGS), 223 to 241 (SSTA…NDSE), and 253 to 263 (SSVSEDPSASS). The span at 530 to 547 (NSDESYSEEEEEMPDSDE) shows a compositional bias: acidic residues. TPR repeat units follow at residues 693 to 726 (SKAY…HDTY) and 914 to 953 (AQAH…LGTR).

The protein resides in the nucleus. Its function is as follows. Transcription factor involved in erythroid differentiation. Involved in transcriptional activation of the globin gene. The protein is Erythroid differentiation-related factor 1 (EDRF1) of Homo sapiens (Human).